The primary structure comprises 227 residues: Octanoyltransferase (227 aa).

The 188-residue stretch at 35–222 (EAYENRIIMC…ELGRLLNEKK (188 aa)) folds into the BPL/LPL catalytic domain. Substrate is bound by residues 80 to 87 (RGGDITYH), 152 to 154 (AIG), and 165 to 167 (GLA). Cysteine 183 (acyl-thioester intermediate) is an active-site residue.

Belongs to the LipB family.

The protein resides in the cytoplasm. It carries out the reaction octanoyl-[ACP] + L-lysyl-[protein] = N(6)-octanoyl-L-lysyl-[protein] + holo-[ACP] + H(+). The protein operates within protein modification; protein lipoylation via endogenous pathway; protein N(6)-(lipoyl)lysine from octanoyl-[acyl-carrier-protein]: step 1/2. In terms of biological role, catalyzes the transfer of endogenously produced octanoic acid from octanoyl-acyl-carrier-protein onto the lipoyl domains of lipoate-dependent enzymes. Lipoyl-ACP can also act as a substrate although octanoyl-ACP is likely to be the physiological substrate. The protein is Octanoyltransferase of Bacteroides thetaiotaomicron (strain ATCC 29148 / DSM 2079 / JCM 5827 / CCUG 10774 / NCTC 10582 / VPI-5482 / E50).